We begin with the raw amino-acid sequence, 365 residues long: Anhydro-N-acetylmuramic acid kinase (365 aa).

An ATP-binding site is contributed by 12–19 (GTSMDGMD).

Belongs to the anhydro-N-acetylmuramic acid kinase family.

It catalyses the reaction 1,6-anhydro-N-acetyl-beta-muramate + ATP + H2O = N-acetyl-D-muramate 6-phosphate + ADP + H(+). It functions in the pathway amino-sugar metabolism; 1,6-anhydro-N-acetylmuramate degradation. It participates in cell wall biogenesis; peptidoglycan recycling. Catalyzes the specific phosphorylation of 1,6-anhydro-N-acetylmuramic acid (anhMurNAc) with the simultaneous cleavage of the 1,6-anhydro ring, generating MurNAc-6-P. Is required for the utilization of anhMurNAc either imported from the medium or derived from its own cell wall murein, and thus plays a role in cell wall recycling. This Pseudomonas paraeruginosa (strain DSM 24068 / PA7) (Pseudomonas aeruginosa (strain PA7)) protein is Anhydro-N-acetylmuramic acid kinase.